The primary structure comprises 250 residues: Putative apoptosis inhibitor ORF99 (250 aa).

Residues 13–78 (RVNSFGGWSK…KFSGDCLYLK (66 aa)) form a BIR repeat.

Its function is as follows. May act as an apoptosis inhibitor. The sequence is that of Putative apoptosis inhibitor ORF99 from Ostreid herpesvirus 1 (isolate France) (OsHV-1).